The following is a 201-amino-acid chain: Peptidyl-tRNA hydrolase (201 aa).

Y14 is a tRNA binding site. H19 acts as the Proton acceptor in catalysis. The tRNA site is built by Y64, N66, and N112.

It belongs to the PTH family. As to quaternary structure, monomer.

The protein resides in the cytoplasm. The enzyme catalyses an N-acyl-L-alpha-aminoacyl-tRNA + H2O = an N-acyl-L-amino acid + a tRNA + H(+). Hydrolyzes ribosome-free peptidyl-tRNAs (with 1 or more amino acids incorporated), which drop off the ribosome during protein synthesis, or as a result of ribosome stalling. Functionally, catalyzes the release of premature peptidyl moieties from peptidyl-tRNA molecules trapped in stalled 50S ribosomal subunits, and thus maintains levels of free tRNAs and 50S ribosomes. The sequence is that of Peptidyl-tRNA hydrolase from Rhodopseudomonas palustris (strain BisB18).